We begin with the raw amino-acid sequence, 502 residues long: Mitochondrial fusion and transport protein UGO1 (502 aa).

At Met-1 the chain carries N-acetylmethionine. The Cytoplasmic segment spans residues 1-293 (MNNNNVTEAT…VINSPDISKS (293 aa)). A binds FZO1 region spans residues 1 to 294 (MNNNNVTEAT…INSPDISKSF (294 aa)). The Solcar repeat unit spans residues 288 to 383 (PDISKSFILA…NSFFNKLFDL (96 aa)). A helical; Signal-anchor for type II membrane protein transmembrane segment spans residues 294 to 314 (FILALGAGVFTSIILLPVDLI). Residues 312–502 (DLIRTRLIVT…VDINMEQEKF (191 aa)) are binds MGM1. Topologically, residues 315 to 502 (RTRLIVTSFK…VDINMEQEKF (188 aa)) are mitochondrial intermembrane.

In terms of assembly, interacts with FZO1 through its cytoplasmic domain and with MGM1 through its mitochondrial intermembrane space domain.

It localises to the mitochondrion outer membrane. Its function is as follows. Required for mitochondrial fusion as well as normal mitochondrial morphology by bridging the essential interaction between FZO1 and MGM1. May coordinate fusion of inner and outer membranes during mitochondrial fusion. This chain is Mitochondrial fusion and transport protein UGO1, found in Saccharomyces cerevisiae (strain ATCC 204508 / S288c) (Baker's yeast).